A 199-amino-acid chain; its full sequence is Probable thymidylate kinase (199 aa).

9–16 (GIDGCGKT) provides a ligand contact to ATP.

This sequence belongs to the thymidylate kinase family.

The catalysed reaction is dTMP + ATP = dTDP + ADP. The chain is Probable thymidylate kinase from Methanococcus maripaludis (strain C6 / ATCC BAA-1332).